Consider the following 811-residue polypeptide: Phenylalanine--tRNA ligase beta subunit (811 aa).

A tRNA-binding domain is found at 40–156; the sequence is AEKNENIVVG…EDIEVGSKVD (117 aa). The region spanning 411 to 486 is the B5 domain; the sequence is KSTKEVKVPL…RIHGYDHLPY (76 aa). The Mg(2+) site is built by aspartate 464, aspartate 470, glutamate 473, and glutamate 474. An FDX-ACB domain is found at 717-810; sequence PRYPSVSRDI…VNKKFGSYVR (94 aa).

This sequence belongs to the phenylalanyl-tRNA synthetase beta subunit family. Type 1 subfamily. In terms of assembly, tetramer of two alpha and two beta subunits. Requires Mg(2+) as cofactor.

It is found in the cytoplasm. The enzyme catalyses tRNA(Phe) + L-phenylalanine + ATP = L-phenylalanyl-tRNA(Phe) + AMP + diphosphate + H(+). This Oceanobacillus iheyensis (strain DSM 14371 / CIP 107618 / JCM 11309 / KCTC 3954 / HTE831) protein is Phenylalanine--tRNA ligase beta subunit.